Reading from the N-terminus, the 298-residue chain is uncharacterized protein (298 aa).

Active-site charge relay system residues include Thr43 and Tyr105. Residue Tyr131 is the Proton donor of the active site. Lys159 functions as the Schiff-base intermediate with substrate in the catalytic mechanism.

The protein belongs to the DapA family. As to quaternary structure, homotetramer.

It is found in the cytoplasm. This is an uncharacterized protein from Pyrococcus furiosus (strain ATCC 43587 / DSM 3638 / JCM 8422 / Vc1).